Here is a 932-residue protein sequence, read N- to C-terminus: Beta-mannosidase A (932 aa).

The N-terminal stretch at 1 to 19 (MRVPAQATIAVLASAVSSP) is a signal peptide. Residues asparagine 41, asparagine 81, asparagine 94, asparagine 249, asparagine 261, asparagine 284, asparagine 289, asparagine 318, and asparagine 348 are each glycosylated (N-linked (GlcNAc...) asparagine). Glutamate 480 functions as the Proton donor in the catalytic mechanism. Residues asparagine 538, asparagine 551, asparagine 609, asparagine 624, asparagine 632, asparagine 659, asparagine 739, and asparagine 791 are each glycosylated (N-linked (GlcNAc...) asparagine).

The protein belongs to the glycosyl hydrolase 2 family. Beta-mannosidase A subfamily. In terms of assembly, homodimer.

It is found in the secreted. The catalysed reaction is Hydrolysis of terminal, non-reducing beta-D-mannose residues in beta-D-mannosides.. Its pathway is glycan metabolism; N-glycan degradation. Exoglycosidase that cleaves the single beta-linked mannose residue from the non-reducing end of beta-mannosidic oligosaccharides of various complexity and length. Involved in the degradation of polymeric mannan and galactomannan. In Aspergillus terreus (strain NIH 2624 / FGSC A1156), this protein is Beta-mannosidase A (mndA).